The chain runs to 357 residues: Hypersensitivity response secretion protein HrcU (357 aa).

The disordered stretch occupies residues 1 to 21 (MSDEKTEQPTDKKLEDAHRDG). Transmembrane regions (helical) follow at residues 29–49 (LTAA…ASVF), 84–104 (LVLM…IATW), 149–169 (VAVA…IVGA), 180–200 (IGMT…LILG), and 323–343 (LYGP…AWVG).

The protein belongs to the type III secretion exporter family.

It localises to the cell membrane. Involved in the secretion of PopA, a proteinaceous elicitor of the hypersensitivity response in plants. In Ralstonia nicotianae (strain ATCC BAA-1114 / GMI1000) (Ralstonia solanacearum), this protein is Hypersensitivity response secretion protein HrcU (hrcU).